The following is a 242-amino-acid chain: Type III pantothenate kinase (242 aa).

Position 7 to 14 (7 to 14) interacts with ATP; sequence DLGNSRFK. Substrate-binding positions include Tyr-91 and 98–101; that span reads GVDR. The active-site Proton acceptor is the Asp-100. Position 121 (Thr-121) interacts with ATP. Thr-171 is a binding site for substrate.

This sequence belongs to the type III pantothenate kinase family. In terms of assembly, homodimer. NH4(+) serves as cofactor. It depends on K(+) as a cofactor.

Its subcellular location is the cytoplasm. It catalyses the reaction (R)-pantothenate + ATP = (R)-4'-phosphopantothenate + ADP + H(+). It functions in the pathway cofactor biosynthesis; coenzyme A biosynthesis; CoA from (R)-pantothenate: step 1/5. Catalyzes the phosphorylation of pantothenate (Pan), the first step in CoA biosynthesis. This is Type III pantothenate kinase from Xanthomonas axonopodis pv. citri (strain 306).